We begin with the raw amino-acid sequence, 72 residues long: Translation initiation factor IF-1 (72 aa).

The region spanning 1 to 72 is the S1-like domain; that stretch reads MSKEEVLEFS…TKGRITYRYK (72 aa).

Belongs to the IF-1 family. Component of the 30S ribosomal translation pre-initiation complex which assembles on the 30S ribosome in the order IF-2 and IF-3, IF-1 and N-formylmethionyl-tRNA(fMet); mRNA recruitment can occur at any time during PIC assembly.

It is found in the cytoplasm. Its function is as follows. One of the essential components for the initiation of protein synthesis. Stabilizes the binding of IF-2 and IF-3 on the 30S subunit to which N-formylmethionyl-tRNA(fMet) subsequently binds. Helps modulate mRNA selection, yielding the 30S pre-initiation complex (PIC). Upon addition of the 50S ribosomal subunit IF-1, IF-2 and IF-3 are released leaving the mature 70S translation initiation complex. The polypeptide is Translation initiation factor IF-1 (Bartonella quintana (strain Toulouse) (Rochalimaea quintana)).